The sequence spans 148 residues: Large ribosomal subunit protein uL15 (148 aa).

Residues 1–61 are disordered; sequence MELNELRPAV…GGQMPMQRRL (61 aa). The span at 30-39 shows a compositional bias: basic residues; it reads TATKGHKGQK.

The protein belongs to the universal ribosomal protein uL15 family. Part of the 50S ribosomal subunit.

Its function is as follows. Binds to the 23S rRNA. The chain is Large ribosomal subunit protein uL15 from Geobacter sulfurreducens (strain ATCC 51573 / DSM 12127 / PCA).